The chain runs to 384 residues: Protein V (384 aa).

Disordered stretches follow at residues 1-23 (MDQD…GGRE) and 38-318 (SEPT…KKGH). A compositionally biased stretch (basic and acidic residues) spans 7–20 (ILKEDSEVEREAPG). The segment covering 50-59 (LHNTINTPQG) has biased composition (polar residues). S68 carries the phosphoserine; by host modification. The span at 83–101 (RSGEESRVSGRTSKPEAEA) shows a compositional bias: basic and acidic residues. S125 is subject to Phosphoserine; by host. Positions 150–168 (GIEDENREMAAHPDKRGED) are enriched in basic and acidic residues. The segment covering 191–206 (ASNNGRSMEPGSSHSA) has biased composition (polar residues). 4 positions are modified to phosphoserine; by host: S192, S249, S257, and S260. Residues H318, C337, C341, C353, C355, C358, C362, and C365 each contribute to the Zn(2+) site.

It belongs to the paramyxoviruses V protein family. Interacts with host IFIH1/MDA5 and DHX58/LGP2. Interacts with host IRF3. Interacts with host RIGI regulatory protein (via CARDs domain) and host TRIM25 (via SPRY domain); these interactions prevent TRIM25-mediated ubiquitination of RIG-I and disrupts downstream RIG-I signaling.

The protein resides in the host cytoplasm. Plays an essential role in the inhibition of host immune response. Prevents the establishment of cellular antiviral state by blocking interferon-alpha/beta (IFN-alpha/beta) production and signaling pathway. Interacts with host IFIH1/MDA5 and DHX58/LGP2 to inhibit the transduction pathway involved in the activation of IFN-beta promoter, thus protecting the virus against cell antiviral state. Also interacts with and inhibits host IRF3. Blocks the type I interferon signaling pathway by disrupting the RIG-I signaling pathway. This chain is Protein V (P/V/C), found in Sendai virus (strain Harris) (SeV).